The sequence spans 613 residues: Ribosome-associated molecular chaperone SSB1 (613 aa).

Residue Ala2 is modified to N-acetylalanine. The segment at 2 to 391 (AEGVFQGAIG…ILTGQSTSDE (390 aa)) is nucleotide binding domain (NBD). ATP is bound at residue 16–18 (TTY). Thr47 is subject to Phosphothreonine. Residues Lys73, 205 to 207 (GGT), 271 to 278 (ERAKRTLS), and Gly342 contribute to the ATP site. The interval 392-402 (TKDLLLLDVAP) is inter-domain linker. Positions 403-613 (LSLGVGMQGD…RVVTKAMSSR (211 aa)) are substrate binding domain (SBD). Positions 428-430 (KRR) match the Contributes to ribosome binding motif. Phosphothreonine is present on Thr431. Residues 516–612 (SEEIEKMVNQ…KRVVTKAMSS (97 aa)) form a lid domain (SBDalpha) region. A Nuclear export signal motif is present at residues 574-582 (IEAALSDAL). Positions 601–613 (GLKRVVTKAMSSR) are required for interaction with ribosomes.

Belongs to the heat shock protein 70 family. Ssb-type Hsp70 subfamily. As to quaternary structure, binds to ribosomes. Binds close to the ribosomal tunnel exit via contacts with both ribosomal proteins RPL35, RPL39 and RPL19, and rRNA. Directly interacts with nascent polypeptides. This interaction is dependent on the ribosome-associated complex (RAC). Interacts with SSE1. Interacts with FES1. Interacts with NAP1.

It is found in the cytoplasm. The enzyme catalyses ATP + H2O = ADP + phosphate + H(+). Ribosome-bound, Hsp70-type chaperone that assists in the cotranslational folding of newly synthesized proteins in the cytosol. Stimulates folding by interacting with nascent chains, binding to short, largely hydrophobic sequences exposed by unfolded proteins, thereby stabilizing longer, more slowly translated, and aggregation-prone nascent polypeptides and domains that cannot fold stably until fully synthesized. The Hsp70-protein substrate interaction depends on ATP-binding and on allosteric regulation between the NBD and the SBD. The ATP-bound state is characterized by a fast exchange rate of substrate (low affinity state), while in the ADP-bound state exchange is much slower (high affinity state). During the Hsp70 cycle, the chaperone switches between the ATP-bound state (open conformation) and the ADP-bound state (closed conformation) by major conformational rearrangements involving mainly the lid domain. Ssb cooperates with a specific Hsp40/Hsp70 co-chaperone termed the ribosome-associated complex (RAC), which stimulates the ATPase activity of the ribosome-associated pool of Ssbs and switches it to the high affinity substrate binding state. Hsp110 chaperone SSE1 and FES1 act as nucleotide exchange factors that cause substrate release. The sequence is that of Ribosome-associated molecular chaperone SSB1 from Saccharomyces cerevisiae (strain ATCC 204508 / S288c) (Baker's yeast).